The primary structure comprises 272 residues: sn-1 stearoyl-lipid 9-desaturase (272 aa).

2 helical membrane-spanning segments follow: residues 11–31 (INWV…FAFI) and 39–59 (AVGV…TLGF). The short motif at 60–65 (HRLVTH) is the Histidine box-1 element. The short motif at 97 to 101 (HRIHH) is the Histidine box-2 element. Residues 160–180 (IALGLLLLYLGGWSFVVWGVF) form a helical membrane-spanning segment. The Histidine box-3 motif lies at 230-234 (HHAFQ).

The protein belongs to the fatty acid desaturase type 2 family. Requires Fe(2+) as cofactor.

It is found in the membrane. It catalyses the reaction a 1-octadecanoyl 2-acyl-glycerolipid + 2 reduced [2Fe-2S]-[ferredoxin] + O2 + 2 H(+) = a 1-[(9Z)-octadecenoyl]-2-acyl-glycerolipid + 2 oxidized [2Fe-2S]-[ferredoxin] + 2 H2O. It participates in lipid metabolism; polyunsaturated fatty acid biosynthesis. In terms of biological role, desaturase involved in fatty acid biosynthesis. Introduces a double bond at carbon 9 of stearoyl groups (18:0) attached to the sn-1 position of the glycerol moiety of membrane glycerolipids. Does not desaturate palmitic acid (16:0), palmitoleic acid (16:1) and cis-vaccenic acid (18:1). The polypeptide is sn-1 stearoyl-lipid 9-desaturase (Anabaena variabilis).